A 335-amino-acid polypeptide reads, in one-letter code: Phosphatidylglycerol--prolipoprotein diacylglyceryl transferase (335 aa).

Transmembrane regions (helical) follow at residues 31-51, 67-87, and 100-120; these read IYWY…TYSL, YIFL…LAIG, and LAIQ…FPLI. R163 is an a 1,2-diacyl-sn-glycero-3-phospho-(1'-sn-glycerol) binding site. Helical transmembrane passes span 213–233, 235–255, and 277–297; these read PLFL…YFGL, YIKQ…YGVT, and SLLL…APLL.

The protein belongs to the Lgt family.

The protein resides in the cell membrane. It catalyses the reaction L-cysteinyl-[prolipoprotein] + a 1,2-diacyl-sn-glycero-3-phospho-(1'-sn-glycerol) = an S-1,2-diacyl-sn-glyceryl-L-cysteinyl-[prolipoprotein] + sn-glycerol 1-phosphate + H(+). It participates in protein modification; lipoprotein biosynthesis (diacylglyceryl transfer). In terms of biological role, catalyzes the transfer of the diacylglyceryl group from phosphatidylglycerol to the sulfhydryl group of the N-terminal cysteine of a prolipoprotein, the first step in the formation of mature lipoproteins. The protein is Phosphatidylglycerol--prolipoprotein diacylglyceryl transferase of Ureaplasma parvum serovar 3 (strain ATCC 27815 / 27 / NCTC 11736).